We begin with the raw amino-acid sequence, 441 residues long: Xylose isomerase (441 aa).

Active-site residues include histidine 99 and aspartate 102. Glutamate 230, glutamate 266, histidine 269, aspartate 294, aspartate 305, aspartate 307, and aspartate 337 together coordinate Mg(2+).

It belongs to the xylose isomerase family. In terms of assembly, homotetramer. It depends on Mg(2+) as a cofactor.

The protein localises to the cytoplasm. It catalyses the reaction alpha-D-xylose = alpha-D-xylulofuranose. Exhibits xylose isomerase activity. The chain is Xylose isomerase (xylA) from Bacillus sp. (strain LW2).